The sequence spans 744 residues: 6-phosphofructo-2-kinase/fructose-2,6-bisphosphatase (744 aa).

Disordered regions lie at residues 1–23 (MGSG…GGQL) and 213–245 (RSLS…DGSP). Gly2 carries the N-myristoyl glycine lipid modification. The region spanning 17–122 (NGGGGQLYVS…GDARLALFRL (106 aa)) is the CBM20 domain. A compositionally biased stretch (polar residues) spans 213–232 (RSLSASGSFRNDSTPKAAQR). A Phosphoserine; by CPK3 modification is found at Ser220. Phosphoserine occurs at positions 276 and 295. Residues 301–549 (SLSASSFLID…VFFLVNTHLT (249 aa)) are 6-phosphofructo-2-kinase. Phosphoserine; by CPK3 is present on Ser303. 349 to 357 (GLPARGKTF) contributes to the ATP binding site. 2 residues coordinate beta-D-fructose 6-phosphate: Arg382 and Arg406. The active site involves Asp431. Beta-D-fructose 6-phosphate is bound by residues Thr433 and Arg439. Cys460 is a catalytic residue. 469 to 474 (NIRLKI) lines the ATP pocket. The beta-D-fructose 6-phosphate site is built by Arg496 and Tyr500. The tract at residues 550 to 744 (PRPILLTRHG…VQEKRYKLMD (195 aa)) is fructose-2,6-bisphosphatase. Arg557 contributes to the beta-D-fructose 2,6-bisphosphate binding site. His558 acts as the Tele-phosphohistidine intermediate in catalysis. Residues Asn564 and Gly570 each contribute to the beta-D-fructose 2,6-bisphosphate site. The active-site Proton donor/acceptor is the Glu630. Positions 641, 655, 659, 670, 697, and 701 each coordinate beta-D-fructose 2,6-bisphosphate. 652 to 655 (YESR) serves as a coordination point for ATP. Position 697–701 (697–701 (QAVLR)) interacts with ATP.

In the C-terminal section; belongs to the phosphoglycerate mutase family. As to quaternary structure, interacts with 14-3-3 proteins; these interactions may regulate both nitrate assimilation and sucrose/starch partitioning in leaves during the diurnal cycle. Post-translationally, phosphorylation at Ser-220 and Ser-303 by CPK3 promotes 14-3-3 proteins binding.

It localises to the membrane. Its subcellular location is the cytoplasm. The catalysed reaction is beta-D-fructose 2,6-bisphosphate + H2O = beta-D-fructose 6-phosphate + phosphate. The enzyme catalyses beta-D-fructose 6-phosphate + ATP = beta-D-fructose 2,6-bisphosphate + ADP + H(+). Its activity is regulated as follows. 6-phosphofructo-2-kinase activity is activated by pyruvate. 6-phosphofructo-2-kinase activity is inhibited by PPi, phosphoenolpyruvate and 2-phosphoglycerate. Fructose-2,6-bisphosphatase activity is inhibited by pyruvate, fructose 1,6-bisphosphate and 6-phosphogluconate. Synthesis and degradation of fructose 2,6-bisphosphate. Regulates carbon partitioning between sucrose versus starch during the diurnal cycle. This chain is 6-phosphofructo-2-kinase/fructose-2,6-bisphosphatase (FKFBP), found in Arabidopsis thaliana (Mouse-ear cress).